The primary structure comprises 103 residues: Small ribosomal subunit protein uS10 (103 aa).

The protein belongs to the universal ribosomal protein uS10 family. In terms of assembly, part of the 30S ribosomal subunit.

In terms of biological role, involved in the binding of tRNA to the ribosomes. The polypeptide is Small ribosomal subunit protein uS10 (Psychromonas ingrahamii (strain DSM 17664 / CCUG 51855 / 37)).